The chain runs to 438 residues: V-type ATP synthase beta chain (438 aa).

This sequence belongs to the ATPase alpha/beta chains family.

In terms of biological role, produces ATP from ADP in the presence of a proton gradient across the membrane. The V-type beta chain is a regulatory subunit. This chain is V-type ATP synthase beta chain (atpB), found in Chlamydia pneumoniae (Chlamydophila pneumoniae).